Reading from the N-terminus, the 504-residue chain is Lysine--tRNA ligase (504 aa).

Mg(2+)-binding residues include Glu-411 and Glu-418.

The protein belongs to the class-II aminoacyl-tRNA synthetase family. In terms of assembly, homodimer. Mg(2+) serves as cofactor.

The protein resides in the cytoplasm. The catalysed reaction is tRNA(Lys) + L-lysine + ATP = L-lysyl-tRNA(Lys) + AMP + diphosphate. The polypeptide is Lysine--tRNA ligase (Clostridium botulinum (strain Okra / Type B1)).